The sequence spans 128 residues: Glycine cleavage system H protein (128 aa).

The 83-residue stretch at T25 to R107 folds into the Lipoyl-binding domain. N6-lipoyllysine is present on K66.

The protein belongs to the GcvH family. The glycine cleavage system is composed of four proteins: P, T, L and H. The cofactor is (R)-lipoate.

In terms of biological role, the glycine cleavage system catalyzes the degradation of glycine. The H protein shuttles the methylamine group of glycine from the P protein to the T protein. The polypeptide is Glycine cleavage system H protein (Kocuria rhizophila (strain ATCC 9341 / DSM 348 / NBRC 103217 / DC2201)).